Here is a 662-residue protein sequence, read N- to C-terminus: DNA topoisomerase 4 subunit B (662 aa).

Residues Tyr20, Asn60, Asp87, 129 to 135, and Lys359 each bind ATP; that span reads GLHGVGI. The Toprim domain maps to 439–553; it reads TELFIVEGDS…EGHLYLAKPP (115 aa). Mg(2+) is bound by residues Glu445, Asp518, and Asp520.

It belongs to the type II topoisomerase family. ParE type 1 subfamily. Heterotetramer composed of ParC and ParE. Mg(2+) serves as cofactor. It depends on Mn(2+) as a cofactor. The cofactor is Ca(2+).

The enzyme catalyses ATP-dependent breakage, passage and rejoining of double-stranded DNA.. Topoisomerase IV is essential for chromosome segregation. It relaxes supercoiled DNA. Performs the decatenation events required during the replication of a circular DNA molecule. The protein is DNA topoisomerase 4 subunit B of Rickettsia prowazekii (strain Madrid E).